Reading from the N-terminus, the 216-residue chain is MRIGILGGTFDPIHYGHIRPAIEVKHALALDKILLMPNHIPPHKQQPNLTTAQRLNMVADVCSQLDGFELCDIEAKRDTPSYTVVTLEQLKALHPEDELFFIMGMDSFLQLKSWYEWQRLFNFAHLVVCQRPGWQLDAAHPMQQILTARSHAHQETHEGHAKNTHKNSGQIFPVTITPQDISSTQIREQLAKGEIPADLLMPITLDYIQNQRLYLP.

Belongs to the NadD family.

It catalyses the reaction nicotinate beta-D-ribonucleotide + ATP + H(+) = deamido-NAD(+) + diphosphate. It participates in cofactor biosynthesis; NAD(+) biosynthesis; deamido-NAD(+) from nicotinate D-ribonucleotide: step 1/1. Its function is as follows. Catalyzes the reversible adenylation of nicotinate mononucleotide (NaMN) to nicotinic acid adenine dinucleotide (NaAD). This Shewanella baltica (strain OS223) protein is Probable nicotinate-nucleotide adenylyltransferase.